Consider the following 374-residue polypeptide: tRNA-specific 2-thiouridylase MnmA (374 aa).

Residues 12 to 19 (GMSGGVDS) and methionine 38 each bind ATP. The interval 98 to 100 (NPD) is interaction with target base in tRNA. Cysteine 103 functions as the Nucleophile in the catalytic mechanism. Residues cysteine 103 and cysteine 200 are joined by a disulfide bond. Position 127 (glycine 127) interacts with ATP. Residues 150–152 (KDQ) form an interaction with tRNA region. Cysteine 200 acts as the Cysteine persulfide intermediate in catalysis. An interaction with tRNA region spans residues 311-312 (RY).

The protein belongs to the MnmA/TRMU family.

It is found in the cytoplasm. The enzyme catalyses S-sulfanyl-L-cysteinyl-[protein] + uridine(34) in tRNA + AH2 + ATP = 2-thiouridine(34) in tRNA + L-cysteinyl-[protein] + A + AMP + diphosphate + H(+). Its function is as follows. Catalyzes the 2-thiolation of uridine at the wobble position (U34) of tRNA, leading to the formation of s(2)U34. This is tRNA-specific 2-thiouridylase MnmA from Enterococcus faecalis (strain ATCC 700802 / V583).